A 281-amino-acid polypeptide reads, in one-letter code: Putative integrase/recombinase y4rD (281 aa).

The region spanning 5–98 (LLLAPLLESY…AIRSFFHHVA (94 aa)) is the Core-binding (CB) domain. Residues 122 to 281 (EVTHHLTKAE…TMSGTENASV (160 aa)) enclose the Tyr recombinase domain. Catalysis depends on residues Arg-162, Lys-188, His-262, and Arg-265.

Belongs to the 'phage' integrase family.

Seems to be non-functional. This is Putative integrase/recombinase y4rD from Sinorhizobium fredii (strain NBRC 101917 / NGR234).